We begin with the raw amino-acid sequence, 242 residues long: MAGHSKWANIKHKKAAADAKRGKIWTRLIKEIQVAARLGGGDVSSNPRLRLAVDKAADANMPKDNVKRAIDRGVGGADGANYEEIRYEGYGIGGAAIIVDTLTDNRTRTVAEVRHAFSKFGGNMGTDGSVAFMFDHVGQFLFAPGTSEDALMEAALEAGADDVSTNEDGSIEVLCDWQEFSKVKDALEAAGFKAELAEVTMKPQNEVEFTGDDAVKMQKLLDALENLDDVQEVYTNAVIVEE.

It belongs to the TACO1 family.

It localises to the cytoplasm. This Burkholderia multivorans (strain ATCC 17616 / 249) protein is Probable transcriptional regulatory protein Bmul_0984/BMULJ_02280.